Reading from the N-terminus, the 364-residue chain is Aminomethyltransferase (364 aa).

It belongs to the GcvT family. As to quaternary structure, the glycine cleavage system is composed of four proteins: P, T, L and H.

The enzyme catalyses N(6)-[(R)-S(8)-aminomethyldihydrolipoyl]-L-lysyl-[protein] + (6S)-5,6,7,8-tetrahydrofolate = N(6)-[(R)-dihydrolipoyl]-L-lysyl-[protein] + (6R)-5,10-methylene-5,6,7,8-tetrahydrofolate + NH4(+). Functionally, the glycine cleavage system catalyzes the degradation of glycine. The chain is Aminomethyltransferase from Shigella flexneri.